The primary structure comprises 178 residues: Endothelin-2 (178 aa).

The first 24 residues, 1-24 (MPAPGVHHPNTASPFLKTVAAGKG), serve as a signal peptide directing secretion. Residues 25–46 (QVAAAPEHPAPSARARGSHLRP) constitute a propeptide that is removed on maturation. Intrachain disulfides connect cysteine 49–cysteine 63 and cysteine 51–cysteine 59. The propeptide occupies 70-178 (VNTPGQTAPY…RPTHPRRRKR (109 aa)). An endothelin-like region spans residues 96–111 (CECSSGGDPACATFCH). Positions 156-178 (RFPRRPQEAGRQLRPTHPRRRKR) are disordered. Residues 169–178 (RPTHPRRRKR) are compositionally biased toward basic residues.

Belongs to the endothelin/sarafotoxin family.

Its subcellular location is the secreted. In terms of biological role, endothelins are endothelium-derived vasoconstrictor peptides. In Canis lupus familiaris (Dog), this protein is Endothelin-2 (EDN2).